The primary structure comprises 110 residues: uncharacterized protein (110 aa).

It localises to the mitochondrion. This is an uncharacterized protein from Arabidopsis thaliana (Mouse-ear cress).